The primary structure comprises 663 residues: Oligopeptide-binding protein SarA (663 aa).

The first 22 residues, 1 to 22 (MKKGKILALAGVALLATGVLAA), serve as a signal peptide directing secretion. Cysteine 23 is lipidated: N-palmitoyl cysteine. Cysteine 23 carries the S-diacylglycerol cysteine lipid modification. The tract at residues 637-663 (QKAQEKWNKERAESNKKAQEELEKHVK) is disordered.

Belongs to the bacterial solute-binding protein 5 family.

It is found in the cell membrane. Functionally, may be involved in the expression of cell surface properties important for colonization of the human oral cavity. It may also be involved in uptake processes. The polypeptide is Oligopeptide-binding protein SarA (sarA) (Streptococcus gordonii (strain Challis / ATCC 35105 / BCRC 15272 / CH1 / DL1 / V288)).